The following is a 312-amino-acid chain: Secreted RxLR effector protein 14 (312 aa).

An N-terminal signal peptide occupies residues 1–20; it reads MHSFKLLLALIVAICTSCDA. Positions 46-61 match the RxLR-dEER motif; it reads RLLRAKDGKVRADEER.

It belongs to the RxLR effector family.

The protein localises to the secreted. The protein resides in the host nucleus. Secreted effector that completely suppresses the host cell death induced by cell death-inducing proteins. The sequence is that of Secreted RxLR effector protein 14 from Plasmopara viticola (Downy mildew of grapevine).